A 562-amino-acid chain; its full sequence is Abrin-c (562 aa).

The first 34 residues, 1–34 (MDKTLKLLILCLAWTCSFSALRCAARTYPPVATN), serve as a signal peptide directing secretion. Q35 is modified (pyrrolidone carboxylic acid). The active site involves E198. Residue N234 is glycosylated (N-linked (GlcNAc...) asparagine). 3 disulfides stabilise this stretch: C281–C303, C320–C339, and C363–C380. A Ricin B-type lectin 1 domain is found at 307–434 (YEPTVRIGGR…YLMRQGWRTG (128 aa)). A 1-alpha repeat occupies 317-359 (DGMCVDVYDDGYHNGNRIIAWKCKDRLEENQLWTLKSDKTIRS). One copy of the 1-beta repeat lies at 360–400 (NGKCLTTEGYAPGNYVMIYDCTSAVAEATYWEIWDNGTIIN). N-linked (GlcNAc...) asparagine glycosylation is found at N395 and N435. The stretch at 403 to 435 (SALVLSAESSSMGGTLTVQTNEYLMRQGWRTGN) is one 1-gamma repeat. The 125-residue stretch at 437 to 561 (TSPFVTSISG…GKPNQIWLTL (125 aa)) folds into the Ricin B-type lectin 2 domain. The 2-alpha repeat unit spans residues 448 to 483 (SDLCMQAQGSNVWLADCDNNKKEQQWALYTDGSIRS). 2 disulfide bridges follow: C451–C464 and C490–C507. The stretch at 487-526 (TNNCLTSKDHKQGSPIVLMACSNGWASQRWLFKNDGSIYN) is one 2-beta repeat. A 2-gamma repeat occupies 529–562 (DDMVMDVKRSDPSLKEIILHPYHGKPNQIWLTLF).

The protein in the N-terminal section; belongs to the ribosome-inactivating protein family. Type 2 RIP subfamily. In terms of assembly, disulfide-linked dimer of A and B chains.

The catalysed reaction is Endohydrolysis of the N-glycosidic bond at one specific adenosine on the 28S rRNA.. Functionally, the A chain is responsible for inhibiting protein synthesis through the catalytic inactivation of 60S ribosomal subunits by removing adenine from position 4,324 of 28S rRNA. Abrin-a is more toxic than ricin. In terms of biological role, the B chain is a galactose-specific lectin that facilitates the binding of abrin to the cell membrane that precedes endocytosis. This chain is Abrin-c, found in Abrus precatorius (Indian licorice).